We begin with the raw amino-acid sequence, 141 residues long: Galactose-6-phosphate isomerase subunit LacA 1 (141 aa).

It belongs to the LacAB/RpiB family. Heteromultimeric protein consisting of LacA and LacB.

It carries out the reaction aldehydo-D-galactose 6-phosphate = keto-D-tagatose 6-phosphate. It participates in carbohydrate metabolism; D-galactose 6-phosphate degradation; D-tagatose 6-phosphate from D-galactose 6-phosphate: step 1/1. The polypeptide is Galactose-6-phosphate isomerase subunit LacA 1 (Streptococcus pyogenes serotype M6 (strain ATCC BAA-946 / MGAS10394)).